A 45-amino-acid chain; its full sequence is Rubredoxin-1 (45 aa).

Position 1 is an N-formylmethionine (Met1). The Rubredoxin-like domain occupies 1–45; sequence MQKYVCNVCGYEYDPAEHDNVPFDQLPDDWCCPVCGVSKDQFSPA. Cys6, Cys9, Cys32, and Cys35 together coordinate Fe cation.

Belongs to the rubredoxin family. Fe(3+) serves as cofactor.

The protein localises to the cytoplasm. Its function is as follows. Rubredoxin is a small nonheme, iron protein lacking acid-labile sulfide. Its single Fe, chelated to 4 Cys, functions as an electron acceptor and may also stabilize the conformation of the molecule. Functionally, electron acceptor for cytoplasmic lactate dehydrogenase. This Desulfovibrio desulfuricans (strain ATCC 27774 / DSM 6949 / MB) protein is Rubredoxin-1 (rd1).